The primary structure comprises 409 residues: U-box domain-containing protein 28 (409 aa).

Positions 10 to 84 (TVPCFFKCPI…DHWSDSINRR (75 aa)) constitute a U-box domain. 3 ARM repeats span residues 178-218 (RLSN…FIAV), 219-261 (DAES…AIAS), and 263-304 (KRVK…AISS).

It catalyses the reaction S-ubiquitinyl-[E2 ubiquitin-conjugating enzyme]-L-cysteine + [acceptor protein]-L-lysine = [E2 ubiquitin-conjugating enzyme]-L-cysteine + N(6)-ubiquitinyl-[acceptor protein]-L-lysine.. Its pathway is protein modification; protein ubiquitination. Its function is as follows. Functions as an E3 ubiquitin ligase. The chain is U-box domain-containing protein 28 (PUB28) from Arabidopsis thaliana (Mouse-ear cress).